The following is a 313-amino-acid chain: Ribose-phosphate pyrophosphokinase (313 aa).

Residues 37–39 (DGE) and 96–97 (RQ) each bind ATP. Residues His-131 and Asp-170 each contribute to the Mg(2+) site. The active site involves Lys-193. D-ribose 5-phosphate-binding positions include Arg-195, Asp-219, and 223–227 (DTAGT).

Belongs to the ribose-phosphate pyrophosphokinase family. Class I subfamily. Homohexamer. Mg(2+) is required as a cofactor.

It is found in the cytoplasm. The catalysed reaction is D-ribose 5-phosphate + ATP = 5-phospho-alpha-D-ribose 1-diphosphate + AMP + H(+). It functions in the pathway metabolic intermediate biosynthesis; 5-phospho-alpha-D-ribose 1-diphosphate biosynthesis; 5-phospho-alpha-D-ribose 1-diphosphate from D-ribose 5-phosphate (route I): step 1/1. Functionally, involved in the biosynthesis of the central metabolite phospho-alpha-D-ribosyl-1-pyrophosphate (PRPP) via the transfer of pyrophosphoryl group from ATP to 1-hydroxyl of ribose-5-phosphate (Rib-5-P). In Pseudomonas syringae pv. tomato (strain ATCC BAA-871 / DC3000), this protein is Ribose-phosphate pyrophosphokinase.